Reading from the N-terminus, the 325-residue chain is uncharacterized protein (325 aa).

The tract at residues 1–75 is disordered; it reads MSQPPEHPGN…PPPGYPTHLQ (75 aa). Pro residues predominate over residues 24-70; sequence YPPPGYGAPPPPPGYGPPPGTYLPPGYNAPPPPPGYGPPPGPPPPGY. 4 consecutive transmembrane segments (helical) span residues 96-116, 153-173, 205-225, and 273-293; these read AVTL…VIGA, IVMF…HAGI, LLIV…GLIF, and LVGE…AALI.

It to M.tuberculosis Rv2560.

It localises to the cell membrane. This is an uncharacterized protein from Mycobacterium bovis (strain ATCC BAA-935 / AF2122/97).